Reading from the N-terminus, the 370-residue chain is DNA repair protein RAD51 homolog 2 (370 aa).

109–116 (GPPGIGKS) contributes to the ATP binding site.

This sequence belongs to the RecA family. RAD51 subfamily. Preferentially expressed in flower buds and roots.

The protein localises to the nucleus. Its function is as follows. May be involved in the homologous recombination repair (HRR) pathway of double-stranded DNA breaks arising during DNA replication or induced by DNA-damaging agents. This chain is DNA repair protein RAD51 homolog 2 (RAD51B), found in Arabidopsis thaliana (Mouse-ear cress).